Here is a 542-residue protein sequence, read N- to C-terminus: MAAKDVKFAGDAREKMLRGVDILANAVKVTLGPKGRNVVIEKSFGAPRITKDGVSVAKEIELEDKFENLGAQLVREVASKTNDLAGDGTTTATVLAQAIVKEGSKAVAAGMNPMDLKRGIDLAVDAIVKDLAAKAKKVTSNAEIAQVGTISANGDADVGKFLAEAMQKVGNEGVITVEEAKTAETELEVVEGMQFDRGYLSPYFVTNAEKMRVEFEDPYILIHEKKLSNLQELLPVLEAVVQSGKPLVIVAEDVEGEALATLVVNKLRGGLKVAAVKAPGFGDRRKAMLQDIAILTGGQAISEDLGIKLENVNLSMLGRAKKVVIEKENTTIVDGNGEKADIEARVAQIKAQIEETTSDYDREKLQERLAKLAGGVAVIRVGGATEVEVKEKKDRVDDALHATRAAVEEGIVPGGGVALLRAIKVLEGLKVENTDQKTGIDIVRRAIQAPARQIVANAGDDGSVVVGKILENETYTFGYNAQTGEYVDMVASGIIDPAKVVRTALQDAASISALIITTEALVVELPKKAAAAPAMPGGGMDF.

Residues 30–33 (TLGP), K51, 87–91 (DGTTT), G415, and D496 contribute to the ATP site.

Belongs to the chaperonin (HSP60) family. Forms a cylinder of 14 subunits composed of two heptameric rings stacked back-to-back. Interacts with the co-chaperonin GroES.

The protein localises to the cytoplasm. The catalysed reaction is ATP + H2O + a folded polypeptide = ADP + phosphate + an unfolded polypeptide.. Functionally, together with its co-chaperonin GroES, plays an essential role in assisting protein folding. The GroEL-GroES system forms a nano-cage that allows encapsulation of the non-native substrate proteins and provides a physical environment optimized to promote and accelerate protein folding. The polypeptide is Chaperonin GroEL 2 (Azorhizobium caulinodans (strain ATCC 43989 / DSM 5975 / JCM 20966 / LMG 6465 / NBRC 14845 / NCIMB 13405 / ORS 571)).